The following is a 426-amino-acid chain: Glutamate-1-semialdehyde 2,1-aminomutase (426 aa).

Lys-265 carries the N6-(pyridoxal phosphate)lysine modification.

The protein belongs to the class-III pyridoxal-phosphate-dependent aminotransferase family. HemL subfamily. Homodimer. Pyridoxal 5'-phosphate is required as a cofactor.

Its subcellular location is the cytoplasm. The catalysed reaction is (S)-4-amino-5-oxopentanoate = 5-aminolevulinate. It participates in porphyrin-containing compound metabolism; protoporphyrin-IX biosynthesis; 5-aminolevulinate from L-glutamyl-tRNA(Glu): step 2/2. In Pectobacterium carotovorum subsp. carotovorum (strain PC1), this protein is Glutamate-1-semialdehyde 2,1-aminomutase.